The primary structure comprises 191 residues: Pyridoxal 5'-phosphate synthase subunit PdxT (191 aa).

Residue 48–50 coordinates L-glutamine; the sequence is GES. Cys81 serves as the catalytic Nucleophile. Residues Arg109 and 136–137 contribute to the L-glutamine site; that span reads IR. Catalysis depends on charge relay system residues His172 and Glu174.

Belongs to the glutaminase PdxT/SNO family. In the presence of PdxS, forms a dodecamer of heterodimers. Only shows activity in the heterodimer.

The enzyme catalyses aldehydo-D-ribose 5-phosphate + D-glyceraldehyde 3-phosphate + L-glutamine = pyridoxal 5'-phosphate + L-glutamate + phosphate + 3 H2O + H(+). The catalysed reaction is L-glutamine + H2O = L-glutamate + NH4(+). The protein operates within cofactor biosynthesis; pyridoxal 5'-phosphate biosynthesis. Functionally, catalyzes the hydrolysis of glutamine to glutamate and ammonia as part of the biosynthesis of pyridoxal 5'-phosphate. The resulting ammonia molecule is channeled to the active site of PdxS. The polypeptide is Pyridoxal 5'-phosphate synthase subunit PdxT (Thermus thermophilus (strain ATCC BAA-163 / DSM 7039 / HB27)).